A 474-amino-acid chain; its full sequence is MSKKLHIKTWGCQMNEYDSSKMADLMDEYEGYTLTEEASEADVLLLNTCSIREKAQEKVFHQLGRWKKLKEKNPDLIIGVGGCVASQEGKVIKERAQCVDLIFGPQTLHRLPEMIDQIRDGGKAVIDISFPEIEKFDKLPEPRADGPSAFVSIMEGCSKYCSFCVVPYTRGEEVSRPLDDIILEIAQLADQGVREVNLLGQNVNAYRGATHDDEICTFAELLRYVAAIDGIDRLRFTTSHPIEFTQDIIDVYEDTPELVSFLHLPVQSGSDRILTQMKRGHMAIEYKSIIRRLRKARPDIQISSDFIIGFPGESKQDFADTMKLIEDVQFDHSFSFIYSARPGTPAADLPDDVTLAEKKERLAILQDRITQQAMRYSRQMLGTVQRILVEGPSVKNPMELRGRTETSRVVNFEADPKHIGSFVDVEIVDVYTNSLRGTFVRGEDEMDLRRSLTPSDILAKHKKDDDLGVTQYIP.

Positions 3 to 120 (KKLHIKTWGC…LPEMIDQIRD (118 aa)) constitute an MTTase N-terminal domain. The [4Fe-4S] cluster site is built by Cys12, Cys49, Cys83, Cys157, Cys161, and Cys164. A Radical SAM core domain is found at 143 to 375 (RADGPSAFVS…QDRITQQAMR (233 aa)). Residues 378-441 (RQMLGTVQRI…TNSLRGTFVR (64 aa)) enclose the TRAM domain.

Belongs to the methylthiotransferase family. MiaB subfamily. As to quaternary structure, monomer. [4Fe-4S] cluster is required as a cofactor.

The protein resides in the cytoplasm. The catalysed reaction is N(6)-dimethylallyladenosine(37) in tRNA + (sulfur carrier)-SH + AH2 + 2 S-adenosyl-L-methionine = 2-methylsulfanyl-N(6)-dimethylallyladenosine(37) in tRNA + (sulfur carrier)-H + 5'-deoxyadenosine + L-methionine + A + S-adenosyl-L-homocysteine + 2 H(+). Functionally, catalyzes the methylthiolation of N6-(dimethylallyl)adenosine (i(6)A), leading to the formation of 2-methylthio-N6-(dimethylallyl)adenosine (ms(2)i(6)A) at position 37 in tRNAs that read codons beginning with uridine. The polypeptide is tRNA-2-methylthio-N(6)-dimethylallyladenosine synthase (Shewanella sediminis (strain HAW-EB3)).